The following is a 632-amino-acid chain: Phosphoglucomutase, chloroplastic (632 aa).

A chloroplast-targeting transit peptide spans 1-72 (MAMESALTST…PSSPSTSVAQ (72 aa)). Alpha-D-glucose 1,6-bisphosphate contacts are provided by R97 and S190. The Phosphoserine intermediate role is filled by S190. Positions 190, 355, 357, and 359 each coordinate Mg(2+). S190 bears the Phosphoserine mark. 6 residues coordinate alpha-D-glucose 1,6-bisphosphate: D359, R360, T423, E442, S444, and K455.

Belongs to the phosphohexose mutase family. In terms of assembly, monomer. The cofactor is Mg(2+).

It localises to the plastid. Its subcellular location is the chloroplast. It carries out the reaction alpha-D-glucose 1-phosphate = alpha-D-glucose 6-phosphate. The enzyme catalyses O-phospho-L-seryl-[protein] + alpha-D-glucose 1-phosphate = alpha-D-glucose 1,6-bisphosphate + L-seryl-[protein]. It catalyses the reaction alpha-D-glucose 1,6-bisphosphate + L-seryl-[protein] = O-phospho-L-seryl-[protein] + alpha-D-glucose 6-phosphate. Its activity is regulated as follows. Inhibited by the Calvin cycle intermediates fructose-1,6-bisphosphate and ribulose-1,5-bisphosphate. Its function is as follows. Catalyzes the reversible isomerization of alpha-D-glucose 1-phosphate to alpha-D-glucose 6-phosphate. The mechanism proceeds via the intermediate compound alpha-D-glucose 1,6-bisphosphate. This enzyme participates in both the breakdown and synthesis of glucose. Promotes gravitropic responses, negative in shoots but positive in roots, by facilitating starch granules (statoliths) formation. The polypeptide is Phosphoglucomutase, chloroplastic (PGMP) (Solanum tuberosum (Potato)).